Reading from the N-terminus, the 194-residue chain is Ras-related protein RabU (194 aa).

19 to 27 (GYDYECGIK) serves as a coordination point for GTP. Positions 42 to 50 (PESQVGVDF) match the Effector region motif. GTP-binding positions include 68 to 72 (PQNKY) and 130 to 133 (NNSE).

The protein belongs to the small GTPase superfamily. Rab family.

In Dictyostelium discoideum (Social amoeba), this protein is Ras-related protein RabU (rabU).